A 537-amino-acid polypeptide reads, in one-letter code: Exoglucanase 1 (537 aa).

A signal peptide spans 1 to 18; it reads MKGSISYQIYKGALLLSA. The catalytic stretch occupies residues 19–453; sequence LLNSVSAQQV…YVIYSNIKTG (435 aa). A glycan (N-linked (GlcNAc...) asparagine) is linked at Asn136. Residue Glu235 is the Nucleophile of the active site. Catalysis depends on Glu240, which acts as the Proton donor. 2 N-linked (GlcNAc...) asparagine glycosylation sites follow: Asn414 and Asn456. A linker region spans residues 454 to 477; that stretch reads PLNSTFTGGTTSSSSTTTTTSKST. Low complexity predominate over residues 458 to 502; it reads TFTGGTTSSSSTTTTTSKSTSTSSSSKTTTTVTTTTTSSGSSGTG. A disordered region spans residues 458 to 503; the sequence is TFTGGTTSSSSTTTTTSKSTSTSSSSKTTTTVTTTTTSSGSSGTGA. A CBM1 domain is found at 501-537; sequence TGARDWAQCGGNGWTGPTTCVSPYTCTKQNDWYSQCL. 2 disulfide bridges follow: Cys509–Cys526 and Cys520–Cys536.

The protein belongs to the glycosyl hydrolase 7 (cellulase C) family.

It is found in the secreted. The catalysed reaction is Hydrolysis of (1-&gt;4)-beta-D-glucosidic linkages in cellulose and cellotetraose, releasing cellobiose from the non-reducing ends of the chains.. The chain is Exoglucanase 1 (cbh1) from Penicillium janthinellum (Penicillium vitale).